The following is a 1577-amino-acid chain: MSMKMADPTKISILGRESIVADYSIWGTYIVQDLLTNLSSTTYVLVTDTNLGSIYLEKFSKIFNEAAAALSPPPRLLTKEIPPGENSKSRQGKADIEDWMLQQTCGRDTVIIALGGGVIGDLLGFVASTYMRGIRFVQVPTTLLAMVDSSIGGKTAIDTPLGKNLIGAIWQPQRIYIDIDFIDTLPEREFINGMAEVIKTAAISDEKEFAALERHADAILNAARSKARKGRFDAVRQELKDHIVASARHKAYVVTADEREGGLRNLLNLGHSIGHAIEAILSPQVLHGECVAIGMVKELELARYLGILKPVAVSRMIKCLSKYGLPTSLKDQRVRKHTAGKHCPLDQLMANMALDKKNDGPKKKVVLLSAIGQTYEPKASVVSNEDIRAVLAPSIEVIPGVPKSLNVVCAPPGSKSISNRALVLAALGSGTVRIKNLLHSDDTEVMLNALEHLGAATFAWEEEGEVLVVNGNGGKMQASPTELYLGNAGTASRFLTSVATLSGKGSVDFNILTGNNRMKQRPIGDLVDALTVNGAEIEYLEKAGSLPLKIAASGGFKGGRINLAAKVSSQYVSSLLMCAPYAKEPVVLKLVGGRPISLSYIEMTTAMMRSFGIDVQQSTTEEWTYHIPQGSYTNPAEYVIESDASSATYPLAIAAVTGTTCTVPNIGSASLQGDARFAVDVLRPMGCKVEQTATSTTVTGPADGVLRPLPNVDMEPMTDAFLGASVLAAIAQGEGSNHTTRIYGIANQRVKECNRIEAMRVELAKFGVVCREHPDGLEIDGIDRSTLRHPAGGVFCYDDHRVAFSFSILALVAPMPTLILEKECVGKTWPTYWDALKQKFGVRLEGKELDESVTTHHAPADRSNASVIIIGMRGAGKTTTGRWAAKVLNRKFIDLDVELEQTEGKSIPEIIKERGWQGFRDAELALFKRVLAERPTGHVLACGGGIVEIGEARKILTDYHKNKGNVLLVMRDIKRVMEFLNVDKTRPAYIEDMMSVWLRRKPWYHECSNVQYYSRHSSAPELALAVEDFGRFIQVVSGKIDYLAAIRKKRLSFFVSLTLPDLRDTGDLLRTVASGSDAVELRVDLLKDPSSDSAIPSAEYVAEQISFYRSKVALPIVFTVRTVSQGGKFPDDAHDAALELITLAIRSGCEFIDLEITFPEELLRKVTESKAHAKIIASHHDPQGKLNWANGSWIQYYNKALQYGDIIKLVGVAESLKDNTALKEFKDWAEQAHDVPVIAINMGDKGQLSRMLNGFLTPVSHPALPFKAAPGQLSAAEIRKGLSIMGEIPAKKFAIFGKPILASRSPAMHNTLFEQNGLPHVYTRLETDQTQDVKEFIRSPDFGGASVTIPLKLDIIPLIDEVLNEAEIIGAVNTIIPVEGKDGTTRLIGRNTDWSGIVRCLREAGAHSNEGKSSALVIGGGGTARAAIYALHHMGFSTVYVLGRSPEKIQNMASTFPTGFDIRVLENADDIETIPRVAVGTVPGDQPIEPNMREILCTIFKRSGQDPSADGASSVLLEMAYKPSVTPLMRLASDAGWKTIPGLEALVGQGVYQFEYWTGITPVYEVARNAVLGTNEK.

The segment at 1 to 384 is 3-dehydroquinate synthase; sequence MSMKMADPTK…YEPKASVVSN (384 aa). NAD(+)-binding positions include 48-50, 85-88, 116-118, and aspartate 121; these read DTN, ENSK, and GGV. Residue arginine 132 coordinates 7-phospho-2-dehydro-3-deoxy-D-arabino-heptonate. 141 to 142 provides a ligand contact to NAD(+); it reads TT. 2 residues coordinate 7-phospho-2-dehydro-3-deoxy-D-arabino-heptonate: aspartate 148 and lysine 154. Lysine 163 is a binding site for NAD(+). Position 164 (asparagine 164) interacts with 7-phospho-2-dehydro-3-deoxy-D-arabino-heptonate. NAD(+) contacts are provided by residues 181 to 184 and asparagine 192; that span reads FIDT. Residue glutamate 196 participates in Zn(2+) binding. Residues 196–199 and lysine 250 each bind 7-phospho-2-dehydro-3-deoxy-D-arabino-heptonate; that span reads EVIK. Residue glutamate 260 is the Proton acceptor; for 3-dehydroquinate synthase activity of the active site. 7-phospho-2-dehydro-3-deoxy-D-arabino-heptonate-binding positions include 264-268 and histidine 271; that span reads RNLLN. Residue histidine 271 coordinates Zn(2+). The Proton acceptor; for 3-dehydroquinate synthase activity role is filled by histidine 275. 7-phospho-2-dehydro-3-deoxy-D-arabino-heptonate-binding residues include histidine 287 and lysine 356. Histidine 287 contributes to the Zn(2+) binding site. The EPSP synthase stretch occupies residues 397 to 842; the sequence is VIPGVPKSLN…WDALKQKFGV (446 aa). Cysteine 824 (for EPSP synthase activity) is an active-site residue. The interval 864 to 1056 is shikimate kinase; that stretch reads NASVIIIGMR…RKKRLSFFVS (193 aa). Residue 871–878 coordinates ATP; the sequence is GMRGAGKT. A 3-dehydroquinase region spans residues 1057-1277; sequence LTLPDLRDTG…AAPGQLSAAE (221 aa). Histidine 1180 acts as the Proton acceptor; for 3-dehydroquinate dehydratase activity in catalysis. Lysine 1208 acts as the Schiff-base intermediate with substrate; for 3-dehydroquinate dehydratase activity in catalysis. Residues 1290 to 1577 are shikimate dehydrogenase; that stretch reads AKKFAIFGKP…RNAVLGTNEK (288 aa).

The protein in the N-terminal section; belongs to the sugar phosphate cyclases superfamily. Dehydroquinate synthase family. This sequence in the 2nd section; belongs to the EPSP synthase family. In the 3rd section; belongs to the shikimate kinase family. It in the 4th section; belongs to the type-I 3-dehydroquinase family. The protein in the C-terminal section; belongs to the shikimate dehydrogenase family. In terms of assembly, homodimer. Zn(2+) is required as a cofactor.

It is found in the cytoplasm. It carries out the reaction 7-phospho-2-dehydro-3-deoxy-D-arabino-heptonate = 3-dehydroquinate + phosphate. It catalyses the reaction 3-dehydroquinate = 3-dehydroshikimate + H2O. The catalysed reaction is shikimate + NADP(+) = 3-dehydroshikimate + NADPH + H(+). The enzyme catalyses shikimate + ATP = 3-phosphoshikimate + ADP + H(+). It carries out the reaction 3-phosphoshikimate + phosphoenolpyruvate = 5-O-(1-carboxyvinyl)-3-phosphoshikimate + phosphate. It participates in metabolic intermediate biosynthesis; chorismate biosynthesis; chorismate from D-erythrose 4-phosphate and phosphoenolpyruvate: step 2/7. It functions in the pathway metabolic intermediate biosynthesis; chorismate biosynthesis; chorismate from D-erythrose 4-phosphate and phosphoenolpyruvate: step 3/7. The protein operates within metabolic intermediate biosynthesis; chorismate biosynthesis; chorismate from D-erythrose 4-phosphate and phosphoenolpyruvate: step 4/7. Its pathway is metabolic intermediate biosynthesis; chorismate biosynthesis; chorismate from D-erythrose 4-phosphate and phosphoenolpyruvate: step 5/7. It participates in metabolic intermediate biosynthesis; chorismate biosynthesis; chorismate from D-erythrose 4-phosphate and phosphoenolpyruvate: step 6/7. The AROM polypeptide catalyzes 5 consecutive enzymatic reactions in prechorismate polyaromatic amino acid biosynthesis. The chain is Pentafunctional AROM polypeptide from Talaromyces stipitatus (strain ATCC 10500 / CBS 375.48 / QM 6759 / NRRL 1006) (Penicillium stipitatum).